The chain runs to 163 residues: Phosphopantetheine adenylyltransferase (163 aa).

ATP is bound by residues Ser-10 and His-18. Ser-10 is a substrate binding site. Substrate is bound by residues Lys-42, Thr-75, and Arg-89. ATP-binding positions include Gly-90–Arg-92, Glu-100, and Tyr-125–Ser-131.

Belongs to the bacterial CoaD family. As to quaternary structure, homohexamer. Requires Mg(2+) as cofactor.

The protein localises to the cytoplasm. It carries out the reaction (R)-4'-phosphopantetheine + ATP + H(+) = 3'-dephospho-CoA + diphosphate. It participates in cofactor biosynthesis; coenzyme A biosynthesis; CoA from (R)-pantothenate: step 4/5. In terms of biological role, reversibly transfers an adenylyl group from ATP to 4'-phosphopantetheine, yielding dephospho-CoA (dPCoA) and pyrophosphate. This is Phosphopantetheine adenylyltransferase from Enterococcus faecalis (strain ATCC 700802 / V583).